A 176-amino-acid chain; its full sequence is Flavodoxin-like domain-containing protein BilS (176 aa).

The protein operates within porphyrin-containing compound metabolism; protoheme degradation. Functionally, together with BilR, catalyzes reduction of mesobilirubin and/or bilirubin to urobilinogen, a key step during heme degradation. BilS is probably involved in electron transfer for the bilirubin reductase BilR. This is Flavodoxin-like domain-containing protein BilS from Clostridioides difficile (strain CD3).